Reading from the N-terminus, the 200-residue chain is Recombination protein RecR (200 aa).

Residues 58–73 (CSVCGNLTDTDPCFIC) form a C4-type zinc finger. Residues 81–176 (DLLCVVERPR…SVTRIAHGLP (96 aa)) enclose the Toprim domain.

It belongs to the RecR family.

Its function is as follows. May play a role in DNA repair. It seems to be involved in an RecBC-independent recombinational process of DNA repair. It may act with RecF and RecO. This is Recombination protein RecR from Pelotomaculum thermopropionicum (strain DSM 13744 / JCM 10971 / SI).